A 299-amino-acid chain; its full sequence is Taste receptor type 2 member 4 (299 aa).

At 1–9 (MLRLFYFSA) the chain is on the extracellular side. The chain crosses the membrane as a helical span at residues 10–30 (IIASVILNFVGIIMNLFITVV). The Cytoplasmic segment spans residues 31–46 (NCKTWVKSHRISSSDR). Residues 47–67 (ILFSLGITRFLMLGLFLVNTI) traverse the membrane as a helical segment. Residues 68–81 (YFVSSNTERSVYLS) are Extracellular-facing. A helical membrane pass occupies residues 82 to 102 (AFFVLCFMFLDSSSVWFVTLL). The Cytoplasmic segment spans residues 103–131 (NILYCVKITNFQHSVFLLLKRNISPKIPR). A helical membrane pass occupies residues 132–152 (LLLACVLISAFTTCLYITLSQ). Topologically, residues 153-172 (ASPFPELVTTRNNTSFNISE) are extracellular. Asn164, Asn165, and Asn169 each carry an N-linked (GlcNAc...) asparagine glycan. The helical transmembrane segment at 173–193 (GILSLVVSLVLSSSLQFIINV) threads the bilayer. The Cytoplasmic segment spans residues 194–230 (TSASLLIHSLRRHIQKMQKNATGFWNPQTEAHVGAMK). A helical membrane pass occupies residues 231 to 251 (LMVYFLILYIPYSVATLVQYL). At 252–262 (PFYAGMDMGTK) the chain is on the extracellular side. The helical transmembrane segment at 263-283 (SICLIFATLYSPGHSVLIIIT) threads the bilayer. The Cytoplasmic portion of the chain corresponds to 284 to 299 (HPKLKTTAKKILCFKK).

The protein belongs to the G-protein coupled receptor T2R family. As to expression, expressed in subsets of taste receptor cells of the tongue and palate epithelium and exclusively in gustducin-positive cells. Expressed on airway ciliated epithelium.

It is found in the membrane. The protein resides in the cell projection. The protein localises to the cilium membrane. Gustducin-coupled receptor for denatonium and N(6)-propyl-2-thiouracil implicated in the perception of bitter compounds in the oral cavity and the gastrointestinal tract. Signals through PLCB2 and the calcium-regulated cation channel TRPM5. In airway epithelial cells, binding of denatonium increases the intracellular calcium ion concentration and stimulates ciliary beat frequency. This chain is Taste receptor type 2 member 4 (TAS2R4), found in Homo sapiens (Human).